We begin with the raw amino-acid sequence, 637 residues long: uncharacterized protein (637 aa).

The segment at residues 7 to 34 (CDLCRLKKIKCSRGQPRCQTCTLFQADC) is a DNA-binding region (zn(2)-C6 fungal-type). The C2H2-type; degenerate zinc finger occupies 304 to 327 (SLCRTLCGQACLMAQQLNLHRKQS).

The protein localises to the nucleus. This is an uncharacterized protein from Schizosaccharomyces pombe (strain 972 / ATCC 24843) (Fission yeast).